We begin with the raw amino-acid sequence, 670 residues long: Leucine-rich repeat-containing protein 45 (670 aa).

5 LRR repeats span residues 87–108 (TVKS…ALGK), 115–136 (SIRS…FSFF), 145–166 (FLQR…ELAM), 173–194 (SLQE…ALLN), and 201–223 (TLKK…VEQA). Residues 234 to 645 (LSETQNRTSV…ISRMKEEEAQ (412 aa)) are a coiled coil.

Homomer.

Its subcellular location is the cytoplasm. It localises to the cytoskeleton. The protein localises to the microtubule organizing center. It is found in the centrosome. Its function is as follows. Component of the proteinaceous fiber-like linker between two centrioles, required for centrosome cohesion. The sequence is that of Leucine-rich repeat-containing protein 45 (LRRC45) from Gallus gallus (Chicken).